The primary structure comprises 1823 residues: THO complex subunit 2 (1823 aa).

The stretch at 935–1003 forms a coiled coil; that stretch reads NRYESEISKQ…RRRLSREKDT (69 aa). The Nuclear localization signal signature appears at 964–969; the sequence is KRKKEK. Disordered regions lie at residues 1244–1382 and 1394–1823; these read LVGV…KDLN and ALSS…GSRE. Composition is skewed to basic and acidic residues over residues 1272-1283, 1312-1330, and 1356-1367; these read QMLKTKPLDGRT, KSME…DENP, and AKQDFGKDDGKS. A compositionally biased stretch (polar residues) spans 1394 to 1409; the sequence is ALSSTAANGSIATGSS. Over residues 1432 to 1596 the composition is skewed to basic and acidic residues; it reads PRHEIVTSVR…EKSHPDDHFH (165 aa). A compositionally biased stretch (pro residues) spans 1600-1610; that stretch reads LPPPPPLPPNI. Composition is skewed to basic and acidic residues over residues 1616 to 1625, 1636 to 1648, 1655 to 1706, and 1768 to 1785; these read AAKEDLERRA, PRHE…RSEE, DDAK…FEAS, and LGKE…DPIA. Phosphoserine is present on residues serine 1646 and serine 1696. Residues 1802–1816 are compositionally biased toward polar residues; that stretch reads MTVNGKTTRGEQSGS.

The protein belongs to the THOC2 family. Component of the THO complex, which is composed of THO1, THO2, THO3, THO5, THO6 and THO7.

The protein resides in the nucleus. Its function is as follows. Acts as a component of the THO subcomplex of the TREX complex which is thought to couple mRNA transcription, processing and nuclear export. The sequence is that of THO complex subunit 2 (THO2) from Arabidopsis thaliana (Mouse-ear cress).